Consider the following 188-residue polypeptide: V-type ATP synthase subunit E (188 aa).

This sequence belongs to the V-ATPase E subunit family.

Produces ATP from ADP in the presence of a proton gradient across the membrane. In Thermus thermophilus (strain ATCC 27634 / DSM 579 / HB8), this protein is V-type ATP synthase subunit E (atpE).